The sequence spans 211 residues: MSVKAAEVSSLAERINWEKVDGLVPAIVQDFQSSQVLMMGYMNQDALAKTGETGQVTFFSRTKERLWTKGETSGNVLQLVNMSLDCDNDTLLVKVNPIGPTCHTGTTTCWDGDPQEESQMVWLHQLEQLLAARKSADPDSSYTASLYARGTKRISQKVGEEGVEVALAATSGDKAELVCESADLIYHLLVLLQDQGLSMNDVINKLKERHK.

The tract at residues 1–122 is phosphoribosyl-AMP cyclohydrolase; the sequence is MSVKAAEVSS…DPQEESQMVW (122 aa). Residues 123–211 are phosphoribosyl-ATP pyrophosphohydrolase; sequence LHQLEQLLAA…VINKLKERHK (89 aa).

This sequence in the N-terminal section; belongs to the PRA-CH family. The protein in the C-terminal section; belongs to the PRA-PH family.

It is found in the cytoplasm. It catalyses the reaction 1-(5-phospho-beta-D-ribosyl)-ATP + H2O = 1-(5-phospho-beta-D-ribosyl)-5'-AMP + diphosphate + H(+). It carries out the reaction 1-(5-phospho-beta-D-ribosyl)-5'-AMP + H2O = 1-(5-phospho-beta-D-ribosyl)-5-[(5-phospho-beta-D-ribosylamino)methylideneamino]imidazole-4-carboxamide. It participates in amino-acid biosynthesis; L-histidine biosynthesis; L-histidine from 5-phospho-alpha-D-ribose 1-diphosphate: step 2/9. The protein operates within amino-acid biosynthesis; L-histidine biosynthesis; L-histidine from 5-phospho-alpha-D-ribose 1-diphosphate: step 3/9. This is Histidine biosynthesis bifunctional protein HisIE from Vibrio vulnificus (strain YJ016).